A 130-amino-acid chain; its full sequence is MAQVQYIGTGRRKSSVARVRLVPGTGKIVINKREIEEYVPFAALREVIKQPLVATETTGSYDIHVNVNGGGYTGQAGAVRHGIARALLQVDPDFRAALKSAGLLTRDSRMKERKKPGLRGARRAPQFSKR.

Residues 105–130 (TRDSRMKERKKPGLRGARRAPQFSKR) are disordered. The segment covering 111 to 130 (KERKKPGLRGARRAPQFSKR) has biased composition (basic residues).

Belongs to the universal ribosomal protein uS9 family.

The sequence is that of Small ribosomal subunit protein uS9 from Lysinibacillus sphaericus (strain C3-41).